We begin with the raw amino-acid sequence, 112 residues long: Nitrogen regulatory protein P-II (112 aa).

Position 51 is an O-UMP-tyrosine (Y51).

The protein belongs to the P(II) protein family. As to quaternary structure, homotrimer.

In nitrogen-limiting conditions, when the ratio of Gln to 2-ketoglutarate decreases, P-II is uridylylated to P-II-UMP. P-II-UMP allows the deadenylation of glutamine synthetase (GS), thus activating the enzyme. Conversely, in nitrogen excess P-II is deuridylated and promotes the adenylation of GS. P-II indirectly controls the transcription of the GS gene (glnA). P-II prevents NR-II-catalyzed conversion of NR-I to NR-I-phosphate, the transcriptional activator of glnA. When P-II is uridylylated to P-II-UMP, these events are reversed. The protein is Nitrogen regulatory protein P-II (glnB) of Rhizobium etli (strain ATCC 51251 / DSM 11541 / JCM 21823 / NBRC 15573 / CFN 42).